The primary structure comprises 119 residues: Beta-2-microglobulin (119 aa).

The first 21 residues, 1–21 (MGKAAAVVLVTLVALLGLAQA), serve as a signal peptide directing secretion. The Ig-like C1-type domain maps to 25-113 (PKVQVYSRFP…HETLKEPQVY (89 aa)). Cysteines 45 and 100 form a disulfide.

This sequence belongs to the beta-2-microglobulin family. Heterodimer of an alpha chain and a beta chain. Beta-2-microglobulin is the beta-chain of major histocompatibility complex class I molecules.

It localises to the secreted. Component of the class I major histocompatibility complex (MHC). Involved in the presentation of peptide antigens to the immune system. The protein is Beta-2-microglobulin (B2M) of Gallus gallus (Chicken).